The primary structure comprises 517 residues: DNA-(apurinic or apyrimidinic site) endonuclease 2 (517 aa).

Mg(2+) is bound by residues Asn9 and Glu34. The Claspin-like CKB motif signature appears at 82-90 (EEGLSGVFC). Residue Tyr142 is part of the active site. Mg(2+) contacts are provided by Asp183, Asn185, Asp299, and His300. Asp183 (proton donor/acceptor) is an active-site residue. His300 acts as the Proton acceptor in catalysis. Over residues 347-362 (GNTTEESSELTGTPSF) the composition is skewed to polar residues. The tract at residues 347 to 366 (GNTTEESSELTGTPSFTEGA) is disordered. Positions 395–402 (QGNLLSFF) match the PCNA interacting protein (PIP) box motif. The Zn(2+) site is built by Cys463, His466, Cys489, and Cys503. Residues 463–512 (CKGHSEPCVLRTVKKAGPNCGRQFYVCARPEGHSSNPQARCNFFLWLTKK) form a GRF-type zinc finger.

Belongs to the DNA repair enzymes AP/ExoA family. Interacts (via PIP box and GRF-type Zinc finger domain) with pcna; the interaction is required for 3 -5 SSB end resection, assembly of a checkpoint protein complex to SSB sites, and SSB signaling. Interacts with chek1. Mg(2+) is required as a cofactor. Requires Mn(2+) as cofactor. Expressed in eggs (at protein level).

The protein resides in the nucleus. The protein localises to the chromosome. It localises to the cytoplasm. It is found in the mitochondrion. The catalysed reaction is Exonucleolytic cleavage in the 3'- to 5'-direction to yield nucleoside 5'-phosphates.. Its activity is regulated as follows. 3'-5' nuclease activity is stimulated in presence of pcna. Functionally, functions as a weak apurinic/apyrimidinic (AP) endodeoxyribonuclease in the DNA base excision repair (BER) pathway of DNA lesions induced by oxidative and alkylating agents. Initiates repair of AP sites in DNA by catalyzing hydrolytic incision of the phosphodiester backbone immediately adjacent to the damage, generating a single-strand break with 5'-deoxyribose phosphate and 3'-hydroxyl ends. Exhibits 3'-5' exonuclease activity on a 3' DNA substrate; nuclease activity is stimulated by interaction with pcna. Has a preference for the 3' recessed ends over blunt-ended substrates, in both the presence and the absence of pcna. Generates single-stranded DNA (ssDNA) via 3'-5' single-strand break (SSB) end resection, thereby promoting a DNA damage response via replication protein A (rpa2)-binding to ssDNA and the recruitment of a checkpoint protein complex, including atr, atr-interacting protein atrip, and rad9, to damage sites following oxidative stress. Plays a role in reversing blocked 3' DNA ends, problematic lesions that preclude DNA synthesis. Required for chek1 phosphorylation induced by hydrogen peroxide but not by stalled replication forks. The polypeptide is DNA-(apurinic or apyrimidinic site) endonuclease 2 (Xenopus laevis (African clawed frog)).